The following is a 146-amino-acid chain: Basic phospholipase A2 73 (146 aa).

Residues M1–A19 form the signal peptide. Positions A20 to L27 are excised as a propeptide. Disulfide bonds link C38-C98, C54-C145, C56-C72, C71-C126, C78-C119, C87-C112, and C105-C117. 3 residues coordinate Ca(2+): Y55, G57, and G59. H75 is an active-site residue. D76 contributes to the Ca(2+) binding site. D120 is an active-site residue.

It belongs to the phospholipase A2 family. Group I subfamily. D49 sub-subfamily. The cofactor is Ca(2+). In terms of tissue distribution, expressed by the venom gland.

Its subcellular location is the secreted. The enzyme catalyses a 1,2-diacyl-sn-glycero-3-phosphocholine + H2O = a 1-acyl-sn-glycero-3-phosphocholine + a fatty acid + H(+). Its function is as follows. Snake venom phospholipase A2 (PLA2) that inhibits neuromuscular transmission by blocking acetylcholine release from the nerve termini. PLA2 catalyzes the calcium-dependent hydrolysis of the 2-acyl groups in 3-sn-phosphoglycerides. The polypeptide is Basic phospholipase A2 73 (Hydrophis hardwickii (Hardwick's spine-bellied seasnake)).